The primary structure comprises 156 residues: Endogenous retrovirus group K member 18 Pro protein (156 aa).

A Peptidase A2 domain is found at 21 to 96; that stretch reads LEGLVDTGAD…IPLNLWGRDL (76 aa). The active site involves Asp-26. The G-patch domain maps to 111–156; that stretch reads YSPMSQKIMTKMGYIPGKGLGKNEDGIKVPIEAKINHGREGTGYPF.

It belongs to the peptidase A2 family. HERV class-II K(HML-2) subfamily. As to quaternary structure, active as a homodimer. Post-translationally, autoproteolytically processed at the N-terminus. Expected C-terminal autoprocessing not detected. The sequence shown is that of the processed Pro protein.

It carries out the reaction Processing at the authentic HIV-1 PR recognition site and release of the mature p17 matrix and the p24 capsid protein, as a result of the cleavage of the -SQNY-|-PIVQ- cleavage site.. In terms of biological role, retroviral proteases have roles in the processing of the primary translation products and the maturation of the viral particle. Endogenous Pro proteins may have kept, lost or modified their original function during evolution. The protein is Endogenous retrovirus group K member 18 Pro protein (ERVK-18) of Homo sapiens (Human).